Reading from the N-terminus, the 195-residue chain is Imidazoleglycerol-phosphate dehydratase (195 aa).

Belongs to the imidazoleglycerol-phosphate dehydratase family.

It is found in the cytoplasm. It carries out the reaction D-erythro-1-(imidazol-4-yl)glycerol 3-phosphate = 3-(imidazol-4-yl)-2-oxopropyl phosphate + H2O. Its pathway is amino-acid biosynthesis; L-histidine biosynthesis; L-histidine from 5-phospho-alpha-D-ribose 1-diphosphate: step 6/9. This is Imidazoleglycerol-phosphate dehydratase from Ruegeria pomeroyi (strain ATCC 700808 / DSM 15171 / DSS-3) (Silicibacter pomeroyi).